The sequence spans 92 residues: MASQQEKKELDARARQGETVVPGGTGGKSLEAQQHLAEGRSKGGQTRKEQLGGEGYHEMGRKGGLSNNDMSGGERAEQEGIDIDESKFRTKK.

Basic and acidic residues-rich tracts occupy residues 1–16, 37–61, and 72–92; these read MASQQEKKELDARARQ, AEGRSKGGQTRKEQLGGEGYHEMGR, and GGERAEQEGIDIDESKFRTKK. The interval 1 to 92 is disordered; the sequence is MASQQEKKEL…IDESKFRTKK (92 aa).

This sequence belongs to the small hydrophilic plant seed protein family. As to expression, expressed in embryogenic cells, somatic embryos and seeds at the later stages of development. In the embryos, expressed in the procambium, the root and shoot meristem and the protoderm of the cotyledons. Not detected in the endosperm or the aleurone layer, in young leaves or roots.

The protein localises to the nucleus. The chain is Protein EMB-1 from Daucus carota (Wild carrot).